We begin with the raw amino-acid sequence, 418 residues long: Lysophosphatidic acid phosphatase type 6 (418 aa).

The transit peptide at Met1–Ala25 directs the protein to the mitochondrion. Residues Arg51 to Arg161 are substrate binding. His52 acts as the Nucleophile in catalysis. Asp327 (proton donor) is an active-site residue.

The protein belongs to the histidine acid phosphatase family. In terms of assembly, monomer.

It is found in the mitochondrion. It catalyses the reaction a phosphate monoester + H2O = an alcohol + phosphate. The catalysed reaction is 1-(9Z-octadecenoyl)-sn-glycero-3-phosphate + H2O = 1-(9Z-octadecenoyl)-sn-glycerol + phosphate. In terms of biological role, hydrolyzes lysophosphatidic acid (LPA) containing a medium length fatty acid chain to the corresponding monoacylglycerol. Has highest activity with lysophosphatidic acid containing myristate (C14:0), monounsaturated oleate (C18:1) or palmitate (C16:0), and lower activity with C18:0 and C6:0 lysophosphatidic acid. This chain is Lysophosphatidic acid phosphatase type 6 (Acp6), found in Mus musculus (Mouse).